A 900-amino-acid polypeptide reads, in one-letter code: Peroxisomal hydratase-dehydrogenase-epimerase (900 aa).

Short-chain dehydrogenase like stretches follow at residues 6-230 and 319-535; these read SFKD…THES and SLCN…ASEE. Residues I14, K53, N100, R133, Y165, and K169 each contribute to the NADP(+) site. Residue Y165 is the Proton donor of the active site. Residue K169 is the Lowers pKa of active site Tyr of the active site. The (3R)-3-hydroxydecanoyl-CoA site is built by H689, G690, K719, D803, N805, G826, F851, and T852. In terms of domain architecture, MaoC-like spans 775 to 887; it reads EVPHGKVPDF…DTTRNVIVLD (113 aa). A Microbody targeting signal motif is present at residues 898 to 900; that stretch reads SKL.

This sequence belongs to the short-chain dehydrogenases/reductases (SDR) family. As to quaternary structure, monomer.

The protein localises to the peroxisome. It carries out the reaction a (3R)-3-hydroxyacyl-CoA = a (2E)-enoyl-CoA + H2O. The catalysed reaction is a (3R)-3-hydroxyacyl-CoA + NAD(+) = a 3-oxoacyl-CoA + NADH + H(+). It participates in lipid metabolism; fatty acid beta-oxidation. In terms of biological role, second trifunctional enzyme acting on the beta-oxidation pathway for fatty acids, possessing hydratase-dehydrogenase-epimerase activities. Converts trans-2-enoyl-CoA via D-3-hydroxyacyl-CoA to 3-ketoacyl-CoA. The protein is Peroxisomal hydratase-dehydrogenase-epimerase (FOX2) of Saccharomyces cerevisiae (strain ATCC 204508 / S288c) (Baker's yeast).